Reading from the N-terminus, the 431-residue chain is Argininosuccinate lyase (431 aa).

It belongs to the lyase 1 family. Argininosuccinate lyase subfamily.

The protein localises to the cytoplasm. It catalyses the reaction 2-(N(omega)-L-arginino)succinate = fumarate + L-arginine. The protein operates within amino-acid biosynthesis; L-arginine biosynthesis; L-arginine from L-ornithine and carbamoyl phosphate: step 3/3. The sequence is that of Argininosuccinate lyase from Stenotrophomonas maltophilia (strain R551-3).